Reading from the N-terminus, the 822-residue chain is Collagen alpha chain CG42342 (822 aa).

Disordered regions lie at residues 1–45 (MRKH…VEAP) and 66–99 (RLAPPPCQHPINNSNNNSNISNNSSNSSSSKERP). At 1–104 (MRKHKAPPSG…SKERPRPTVR (104 aa)) the chain is on the cytoplasmic side. Residues 11-25 (SPRTMAQDNSQSEPS) show a composition bias toward polar residues. Residues 76–94 (INNSNNNSNISNNSSNSSS) are compositionally biased toward low complexity. Residues 105–125 (FISLLHVASYVLCLCAFSFAL) form a helical; Signal-anchor for type II membrane protein membrane-spanning segment. The Extracellular portion of the chain corresponds to 126–822 (YGNVRQTRLE…EYQDNLHNNE (697 aa)). A coiled-coil region spans residues 131-162 (QTRLEQRMQRLQQLDARIVELELRLEQQQLLH). Disordered stretches follow at residues 169–188 (QVLASHPSDRDSSNSNNGSQ), 205–297 (VSHL…GHPG), and 345–822 (LKGE…HNNE). A coiled-coil region spans residues 194–222 (VRRELHRLRRDVSHLQLTRRQQRRQAAEA). 7 consecutive Collagen-like domains span residues 241–299 (QPGP…PGMD), 350–409 (GEPG…KGDR), 430–469 (GPPGPAGPPGPPGEPGARGEPGPIGPAGPPGEKGPRGKRG), 493–526 (RGPPGPPGIAGKDGRDGRDGSKGEPGEPGEPGSL), 527–586 (GPRG…KGDK), 621–680 (GPPG…SGKA), and 681–740 (GIPG…KGEQ). Residues 242–251 (PGPPGPPGPP) are compositionally biased toward pro residues. The span at 284-293 (PGDKGQKGDV) shows a compositional bias: basic and acidic residues. Over residues 360 to 402 (EAGQPGAPGERGPPGEIGAQGPQGEAGQPGVAGPPGVAGAPGT) the composition is skewed to low complexity. Residues 403–412 (KGDKGDRGDR) are compositionally biased toward basic and acidic residues. Over residues 431 to 443 (PPGPAGPPGPPGE) the composition is skewed to pro residues. Positions 504–517 (KDGRDGRDGSKGEP) are enriched in basic and acidic residues. Residues 522 to 540 (EPGSLGPRGLDGLPGEPGI) show a composition bias toward low complexity. Over residues 567-579 (LMGPPGLPGPPGY) the composition is skewed to pro residues. Over residues 583 to 602 (KGDKGDRGDSYRKMRRRQDD) the composition is skewed to basic and acidic residues. Over residues 619 to 628 (PPGPPGPMGP) the composition is skewed to pro residues. Basic and acidic residues predominate over residues 638–655 (RGLDGRKGDPGEKGHKGD). The span at 658–668 (PMGLPGPMGMR) shows a compositional bias: low complexity. A coiled-coil region spans residues 790 to 822 (TSDYEQEEEEDDEQAEDNENEYDEYQDNLHNNE). A compositionally biased stretch (acidic residues) spans 793 to 815 (YEQEEEEDDEQAEDNENEYDEYQ).

Its subcellular location is the cell membrane. The polypeptide is Collagen alpha chain CG42342 (Drosophila melanogaster (Fruit fly)).